The chain runs to 112 residues: Nitrogen regulatory protein P-II (112 aa).

Ser49 carries the post-translational modification Phosphoserine. An O-UMP-tyrosine modification is found at Tyr51.

The protein belongs to the P(II) protein family. As to quaternary structure, homotrimer. In terms of processing, phosphorylation dependent on the nitrogen source and spectral light quality.

P-II indirectly controls the transcription of the GS gene (glnA). P-II prevents NR-II-catalyzed conversion of NR-I to NR-I-phosphate, the transcriptional activator of glnA. When P-II is phosphorylated, these events are reversed. In nitrogen-limiting conditions, when the ratio of Gln to 2-ketoglutarate decreases, P-II is phosphorylated which allows the deadenylation of glutamine synthetase (GS), thus activating the enzyme. This is Nitrogen regulatory protein P-II (glnB) from Microchaete diplosiphon (Fremyella diplosiphon).